The sequence spans 149 residues: Alpha-amylase/trypsin inhibitor CMb (149 aa).

The N-terminal stretch at 1-24 (MASKSSCDLLLAAVLVSIFAAVAA) is a signal peptide. A glycan (N-linked (GlcNAc...) asparagine) is linked at N124.

The protein belongs to the protease inhibitor I6 (cereal trypsin/alpha-amylase inhibitor) family. Heterotetramer of one CMa, one CMb and two CMd chains. Post-translationally, five disulfide bonds, which are essential for the inhibitor activity, are probably present. In terms of processing, exists both in a glycosylated and in an unglycosylated form. The glycosylated form is a potent allergen. Endosperm.

Its subcellular location is the secreted. Functionally, part of a complex with inhibitory activity, but CMb is inactive as a separate subunit. This Hordeum vulgare (Barley) protein is Alpha-amylase/trypsin inhibitor CMb (IAT2).